A 282-amino-acid chain; its full sequence is MSQPVERSPASTRTVFFVSDGTGITAETFGHSVLTQFELRFKQVRLPFIDTPDKAYDALRKINETFAADGQRPIIFSTLVKADLSSIVRQSQGMHMDLIQTFVEPLEQELGVKSTHTIGRSHTSTDSEEYKNRIEAINFSLAHDDGQSHKNLSAADVILVGVSRSGKTPTSLFLAMQYGIKAANYPLIPDDFEREKLPGGLQAYKHKIFGLSIAADRLAEIRNERLPGSKYAALENCRYEVNEAERMMRREGIRWMSSTTKSIEEIAATILQEIKLDPPIKD.

ADP is bound at residue 161-168; sequence GVSRSGKT.

It belongs to the pyruvate, phosphate/water dikinase regulatory protein family. PSRP subfamily.

It carries out the reaction [pyruvate, water dikinase] + ADP = [pyruvate, water dikinase]-phosphate + AMP + H(+). The catalysed reaction is [pyruvate, water dikinase]-phosphate + phosphate + H(+) = [pyruvate, water dikinase] + diphosphate. Its function is as follows. Bifunctional serine/threonine kinase and phosphorylase involved in the regulation of the phosphoenolpyruvate synthase (PEPS) by catalyzing its phosphorylation/dephosphorylation. This is Putative phosphoenolpyruvate synthase regulatory protein from Janthinobacterium sp. (strain Marseille) (Minibacterium massiliensis).